The primary structure comprises 1826 residues: MILKSFLLGNLVSLCMKIINSVVVVGLYYGFLTTFSIGPSYLFLLRAQVMEEGEEGTEKKVSATTGFITGQLMMFISIYYAPLHLALGRPHTITVLALPYLLFHFFWKNHKNFFDYGSTTRNSMRNLSIQCVFLNNLIFQLFNHFILPSSMLARLVNIYMFRCNNKMLFVTSSFVGWLIGHILFMKWVGLVLVWIRQNNSIRSNKYIRSNKSELINYMARIFSILLFITCVYYLGRIPSPIFTKKLNPQTEEGWESEEETDVEIETASETKGTKQEQEGSTEEDPSPSLFSEEKEDPDKIDETEEIRVNGKEKTKDEFHFTEIRYNNSPVYKGLFWFEKPLLTFLFDYKRWNRPLRYIKNNRFERTTRKEMSQYFFYTCRSDGKERISFTYPPSLSTFGEMIQRRMSLPTLEKLSSAELYNHWVYTNQHKNNNLNNEFLNRIEALDTGFFSLDILEKSTRLCNDKTRKYYLPKMYDPILNGLYRGTIQKKISPSIINKISLENFIETLEINKIHSLLLPDTDYQEFEQKIDQFDKKTFSTENRHLFTLISKLDRESGSRKGLSLFSEKEQGGVGSKKRDKFYKFLLNTILTSPNDQKTKQKFVIKEISKKVPRWSYKLITELEFLSGTAHEGLPLDYQIRSRKRDGIIIYRPTKRSRNASIKNWMSFRDYSEESDFRREFIKGSMRVQRRKTVIWKLFQANAHSPLFLDRIKKYPLFSFNIPERMKSFFRNCMGKGSGLKDYTEEQEDKIKEKASIKIAEAWDFIPYPQATRSLILIIQSIFRKYILLPSLIIVKNIGRILLSQPPEWTEDFDEWNREKHIICTYNGVQVSEFELPKNWFKDGIQIKIVFPFYLKPWHRSKLRTSFSSYKDLKKEEQPKFYFLTAWGAQTTLNFGSIPPKPSFFKPILKELKKKMQKTKNNNLKVLRVLKERTKDFLQDSKEPKEVIIKNVLFLFIKRIKKELFKIHPTRLFILKKVYESGETNKKKDYIIRNQQIHDSFIKIKSTDNKNDSLRDKKIKNLTDRTSTIRTKTKGLMKEKNSNAKKRGSPNKTSFNRKKKSPNILLKILKIKRRSTRLIYKFYLFITIFIKRIYIDIFVCIIHIARISTQLLLESINFCFDKYIYIYNNKTNKTNYNNKTNQEIKKKKEINFISTIKSALYNIQNSKRNSRLFFDLSSLSQAYVFYKLSQTPIIHFYKLRDIFEYNGTPFFLKTAMKNYFLTQGIFHSELRHTKLSSYETNQWKSWLRGHYQYNLSQIRWSGLIPKKWRTTINEGGMTPNKDLTKCNSYEKDRLLYHKKQKDFKVYPLPNQKDNFLKYYIYDLFSYKSINSEIKKSSYIFFGSPSELKNNQKIAFNYNKKKQNLSENLEEIPINHYLETGDIMYMKKNPDRKYFDWTILNFFIRQKIDIEAWTKMDYNSNINTKLGNTNYHKIYKMDKNAILSLTIHQDLERNPINDKKIFFDWMEMNEEILNPISTNLKLTFFPEFVPLYNVYKTKPWIIPSKLLLLNLNKKKNINENKKFHFFRPSNEKIYYELMNRNQEEKKTAGRRGLRSYAQNQDKMKKKYKIRNKMRREIIFLRKHYLLFQWIIDDGLIPKLTERMINNIKIYCYLLGLRNPRDTTISSIQRKELNLDIMVIRQKLTPIELNKKGIFFLDPTRLSVKNDGYFIIYQTVGISLVHKSKYQTPQRYREQRYINKKKLDESIPRYQIILRKRDKKHYDFVVPENILSSRRRRELRILLSFNSKNLNSVDKNPVFCNKKNIKRRNPFLDQKKHLDRDKNELIKLKLFLWPNYRLEDLACMNRYWFNTNNGSRFSILRIYPQFKIG.

5 helical membrane-spanning segments follow: residues 18-38, 67-87, 127-147, 175-195, and 221-241; these read IINS…FSIG, FITG…HLAL, LSIQ…HFIL, VGWL…LVWI, and IFSI…PSPI. Residues 250–308 form a disordered region; that stretch reads TEEGWESEEETDVEIETASETKGTKQEQEGSTEEDPSPSLFSEEKEDPDKIDETEEIRV. Composition is skewed to acidic residues over residues 252 to 266 and 293 to 304; these read EGWE…EIET and EKEDPDKIDETE. Residues 774-794 form a helical membrane-spanning segment; it reads LILIIQSIFRKYILLPSLIIV. The tract at residues 1032 to 1057 is disordered; the sequence is TKGLMKEKNSNAKKRGSPNKTSFNRK. A compositionally biased stretch (basic residues) spans 1042–1057; the sequence is NAKKRGSPNKTSFNRK. Residues 1081–1101 traverse the membrane as a helical segment; that stretch reads FYLFITIFIKRIYIDIFVCII.

Belongs to the TIC214 family. As to quaternary structure, part of the Tic complex.

It localises to the plastid. It is found in the chloroplast inner membrane. Functionally, involved in protein precursor import into chloroplasts. May be part of an intermediate translocation complex acting as a protein-conducting channel at the inner envelope. This Daucus carota (Wild carrot) protein is Protein TIC 214.